The sequence spans 167 residues: Nascent polypeptide-associated complex subunit beta (167 aa).

2 disordered regions span residues 1–48 (MDQA…GADD) and 133–167 (QNMQ…SKVE). A compositionally biased stretch (basic residues) spans 25–42 (NRNRGKGTPRRKVKKVHK). One can recognise an NAC-A/B domain in the interval 45–110 (GADDKKLQAT…GEEKELTELV (66 aa)). Residues 148–161 (DEEDDIPDLVEGQD) are compositionally biased toward acidic residues.

It belongs to the NAC-beta family. Part of the nascent polypeptide-associated complex (NAC), consisting of egd2 and egd1. NAC associates with ribosomes via egd1.

It localises to the cytoplasm. The protein localises to the nucleus. Its function is as follows. Component of the nascent polypeptide-associated complex (NAC), a dynamic component of the ribosomal exit tunnel, protecting the emerging polypeptides from interaction with other cytoplasmic proteins to ensure appropriate nascent protein targeting. The NAC complex also promotes mitochondrial protein import by enhancing productive ribosome interactions with the outer mitochondrial membrane and blocks the inappropriate interaction of ribosomes translating non-secretory nascent polypeptides with translocation sites in the membrane of the endoplasmic reticulum. EGD1 may act as a transcription factor that exert a negative effect on the expression of several genes that are transcribed by RNA polymerase II. The sequence is that of Nascent polypeptide-associated complex subunit beta (egd1) from Aspergillus terreus (strain NIH 2624 / FGSC A1156).